A 340-amino-acid chain; its full sequence is Uroporphyrinogen decarboxylase (340 aa).

Residues Arg21–Arg25, Asp71, Tyr148, Ser203, and His316 each bind substrate.

This sequence belongs to the uroporphyrinogen decarboxylase family. Homodimer.

The protein resides in the cytoplasm. It catalyses the reaction uroporphyrinogen III + 4 H(+) = coproporphyrinogen III + 4 CO2. Its pathway is porphyrin-containing compound metabolism; protoporphyrin-IX biosynthesis; coproporphyrinogen-III from 5-aminolevulinate: step 4/4. Its function is as follows. Catalyzes the decarboxylation of four acetate groups of uroporphyrinogen-III to yield coproporphyrinogen-III. In Campylobacter concisus (strain 13826), this protein is Uroporphyrinogen decarboxylase.